The primary structure comprises 220 residues: UPF0319 protein YccT (220 aa).

An N-terminal signal peptide occupies residues methionine 1 to alanine 20.

It belongs to the UPF0319 family.

The protein is UPF0319 protein YccT of Escherichia coli (strain 55989 / EAEC).